Consider the following 289-residue polypeptide: YLVNPAAYAALGAYMFLLILIGFPVNFLTLYVTLEHKKLRTPLNYILLNLAVADLFMVLGGFTTTMYTSMHGYFVLGRLGCNLEGFFATLGGEIALWSLVVLAIERWIVVCKPISNFRFTEDHAIMGLAFSWVMALSCSVPPLVGWSRYIPEAMQCSCGVDYYTRAEGFNTESFVLYMFTVHFLIPLSVIFFCYGRLLCAVKEAAAAQQESETTQRSEKEVSRMVVLMVIGFLVCWLPYASTAWWIFCNQGSEFGPVFMTIPAFFAKSSAIYNPMIYICMNKQFRHCMI.

Topologically, residues 1-7 are extracellular; it reads YLVNPAA. The helical transmembrane segment at 8–32 threads the bilayer; the sequence is YAALGAYMFLLILIGFPVNFLTLYV. The Cytoplasmic segment spans residues 33–44; that stretch reads TLEHKKLRTPLN. A helical transmembrane segment spans residues 45–67; the sequence is YILLNLAVADLFMVLGGFTTTMY. At 68–81 the chain is on the extracellular side; sequence TSMHGYFVLGRLGC. The cysteines at positions 81 and 158 are disulfide-linked. Residues 82-104 form a helical membrane-spanning segment; it reads NLEGFFATLGGEIALWSLVVLAI. A 'Ionic lock' involved in activated form stabilization motif is present at residues 105–107; the sequence is ERW. The Cytoplasmic segment spans residues 105–123; it reads ERWIVVCKPISNFRFTEDH. Residues 124-144 form a helical membrane-spanning segment; the sequence is AIMGLAFSWVMALSCSVPPLV. Residues 145–173 lie on the Extracellular side of the membrane; that stretch reads GWSRYIPEAMQCSCGVDYYTRAEGFNTES. The helical transmembrane segment at 174 to 195 threads the bilayer; the sequence is FVLYMFTVHFLIPLSVIFFCYG. Topologically, residues 196–223 are cytoplasmic; it reads RLLCAVKEAAAAQQESETTQRSEKEVSR. Residues 224–245 traverse the membrane as a helical segment; it reads MVVLMVIGFLVCWLPYASTAWW. Residues 246-257 are Extracellular-facing; the sequence is IFCNQGSEFGPV. Residues 258–279 traverse the membrane as a helical segment; sequence FMTIPAFFAKSSAIYNPMIYIC. Lysine 267 carries the post-translational modification N6-(retinylidene)lysine. Over 280-289 the chain is Cytoplasmic; the sequence is MNKQFRHCMI.

It belongs to the G-protein coupled receptor 1 family. Opsin subfamily. Post-translationally, phosphorylated on some or all of the serine and threonine residues present in the C-terminal region. Contains one covalently linked retinal chromophore.

The protein resides in the membrane. Its subcellular location is the cell projection. The protein localises to the cilium. It is found in the photoreceptor outer segment. Photoreceptor required for image-forming vision at low light intensity. While most salt water fish species use retinal as chromophore, most freshwater fish use 3-dehydroretinal, or a mixture of retinal and 3-dehydroretinal. Light-induced isomerization of 11-cis to all-trans retinal triggers a conformational change that activates signaling via G-proteins. Subsequent receptor phosphorylation mediates displacement of the bound G-protein alpha subunit by arrestin and terminates signaling. The protein is Rhodopsin (rho) of Comephorus dybowskii.